The following is a 413-amino-acid chain: FAD-dependent monooxygenase vrtH (413 aa).

A signal peptide spans 1-23 (MQRANHTRPVLIIGAGLSGLAIG). Asparagine 5 carries N-linked (GlcNAc...) asparagine glycosylation. Glutamate 37 and alanine 48 together coordinate FAD. N-linked (GlcNAc...) asparagine glycosylation is present at asparagine 94. Arginine 120 provides a ligand contact to FAD. Residue asparagine 232 is glycosylated (N-linked (GlcNAc...) asparagine). 2 residues coordinate FAD: aspartate 327 and glycine 340.

This sequence belongs to the paxM FAD-dependent monooxygenase family. FAD serves as cofactor.

Its pathway is secondary metabolite biosynthesis; terpenoid biosynthesis. Its function is as follows. FAD-dependent monooxygenase; part of the gene cluster that mediates the biosynthesis of viridicatumtoxin, a tetracycline-like fungal meroterpenoid with a unique, fused spirobicyclic ring system. The first step of the pathway is the production of the malonamoyl-CoA starter unit for the polyketide synthase vrtA. The aldolase vrtJ may be involved in the synthesis of the malonamate substrate for malonamoyl-CoA synthetase vrtB. The polyketide synthase vrtA then may utilize the malonamoyl-CoA starter unit, followed by sequential condensation of eight malonyl-CoA units to form the polyketide backbone. The cyclization of the last ring could be mediated by the lactamase-like protein vrtG. The proposed post-PKS tailoring steps are a hydroxylation at C5 catalyzed the cytochrome P450 monooxygenase vrtE, a hydroxylation at C12a catalyzed by VrtH and/or VrtI, and an O-methylation by the O-methyltransferase vrtF. VrtC is then proposed to catalyze the transfer of a geranyl group synthesized by vrtD to the aromatic C ring of the tetracyclic polyketide intermediate of viridicatumtoxin to yield previridicatumtoxin. Finally, the cytochrome P450 monooxygenase vrtK catalyzes the spirocyclization of the geranyl moiety of previridicatumtoxin to afford viridicatumtoxin. The polypeptide is FAD-dependent monooxygenase vrtH (Penicillium aethiopicum).